Consider the following 60-residue polypeptide: Mastoparan-VT5 (60 aa).

Residues methionine 1–alanine 27 form the signal peptide. AXPX repeat units lie at residues alanine 27–leucine 30, alanine 31–leucine 34, alanine 37–aspartate 40, and alanine 41–glutamate 44. Positions aspartate 28 to threonine 45 are excised as a propeptide.

Belongs to the MCD family. Mastoparan subfamily. Expressed by the venom gland.

The protein resides in the secreted. Its function is as follows. The synthetic peptide shows weak antimicrobial activities against a few Gram-positive bacteria (only 2 on the 11 strains tested) and the fungus C.albicans. Does not show activity against all the Gram-negative bacteria tested. Exhibits little hemolytic activity against washed human erythrocytes. The chain is Mastoparan-VT5 from Vespa tropica (Greater banded hornet).